Reading from the N-terminus, the 119-residue chain is NADH dehydrogenase [ubiquinone] 1 subunit C2 (119 aa).

Residues 56 to 75 (GLHRQLLYITAFFFAGYYLV) form a helical membrane-spanning segment.

Belongs to the complex I NDUFC2 subunit family. As to quaternary structure, complex I is composed of 45 different subunits. Interacts with TMEM242.

Its subcellular location is the mitochondrion inner membrane. Its function is as follows. Accessory subunit of the mitochondrial membrane respiratory chain NADH dehydrogenase (Complex I), that is believed not to be involved in catalysis but required for the complex assembly. Complex I functions in the transfer of electrons from NADH to the respiratory chain. The immediate electron acceptor for the enzyme is believed to be ubiquinone. This is NADH dehydrogenase [ubiquinone] 1 subunit C2 from Pongo pygmaeus (Bornean orangutan).